The primary structure comprises 319 residues: Ribose-phosphate pyrophosphokinase (319 aa).

Residues 40-42 (DGE) and 99-100 (RQ) contribute to the ATP site. Mg(2+) is bound by residues His134 and Asp174. Lys198 is a catalytic residue. D-ribose 5-phosphate is bound by residues Arg200, Asp224, and 228-232 (DTAGT).

Belongs to the ribose-phosphate pyrophosphokinase family. Class I subfamily. In terms of assembly, homohexamer. Requires Mg(2+) as cofactor.

The protein localises to the cytoplasm. The enzyme catalyses D-ribose 5-phosphate + ATP = 5-phospho-alpha-D-ribose 1-diphosphate + AMP + H(+). It participates in metabolic intermediate biosynthesis; 5-phospho-alpha-D-ribose 1-diphosphate biosynthesis; 5-phospho-alpha-D-ribose 1-diphosphate from D-ribose 5-phosphate (route I): step 1/1. Functionally, involved in the biosynthesis of the central metabolite phospho-alpha-D-ribosyl-1-pyrophosphate (PRPP) via the transfer of pyrophosphoryl group from ATP to 1-hydroxyl of ribose-5-phosphate (Rib-5-P). The polypeptide is Ribose-phosphate pyrophosphokinase (Xanthomonas campestris pv. campestris (strain ATCC 33913 / DSM 3586 / NCPPB 528 / LMG 568 / P 25)).